Here is a 396-residue protein sequence, read N- to C-terminus: Vacuolar protease A (396 aa).

The N-terminal stretch at 1–17 is a signal peptide; it reads MKGALLTAAMLLGSAQA. Positions 18–70 are cleaved as a propeptide — activation peptide; that stretch reads GVHTMKLKKVPLAEQLESVPIDVQVQHLGQKYTGLRTESHTQAMFKATDAQVS. Residues 85-392 enclose the Peptidase A1 domain; that stretch reads YFSEITIGTP…DLGADTVGIA (308 aa). Asp103 is an active-site residue. Cys116 and Cys121 are oxidised to a cystine. Asn138 carries an N-linked (GlcNAc...) asparagine glycan. Asp284 is a catalytic residue. Cysteines 318 and 351 form a disulfide. Asn335 is a glycosylation site (N-linked (GlcNAc...) asparagine).

It belongs to the peptidase A1 family.

It localises to the vacuole. The polypeptide is Vacuolar protease A (pep-4) (Neurospora crassa (strain ATCC 24698 / 74-OR23-1A / CBS 708.71 / DSM 1257 / FGSC 987)).